Consider the following 507-residue polypeptide: ATP synthase subunit alpha (507 aa).

Residue 168-175 (GDRQTGKT) coordinates ATP.

Belongs to the ATPase alpha/beta chains family. F-type ATPases have 2 components, CF(1) - the catalytic core - and CF(0) - the membrane proton channel. CF(1) has five subunits: alpha(3), beta(3), gamma(1), delta(1), epsilon(1). CF(0) has three main subunits: a(1), b(2) and c(9-12). The alpha and beta chains form an alternating ring which encloses part of the gamma chain. CF(1) is attached to CF(0) by a central stalk formed by the gamma and epsilon chains, while a peripheral stalk is formed by the delta and b chains.

The protein localises to the cell membrane. It catalyses the reaction ATP + H2O + 4 H(+)(in) = ADP + phosphate + 5 H(+)(out). Its function is as follows. Produces ATP from ADP in the presence of a proton gradient across the membrane. The alpha chain is a regulatory subunit. The chain is ATP synthase subunit alpha from Mesomycoplasma hyopneumoniae (strain 232) (Mycoplasma hyopneumoniae).